A 513-amino-acid chain; its full sequence is ATP synthase subunit alpha (513 aa).

169-176 is an ATP binding site; the sequence is GDRQTGKT.

Belongs to the ATPase alpha/beta chains family. F-type ATPases have 2 components, CF(1) - the catalytic core - and CF(0) - the membrane proton channel. CF(1) has five subunits: alpha(3), beta(3), gamma(1), delta(1), epsilon(1). CF(0) has three main subunits: a(1), b(2) and c(9-12). The alpha and beta chains form an alternating ring which encloses part of the gamma chain. CF(1) is attached to CF(0) by a central stalk formed by the gamma and epsilon chains, while a peripheral stalk is formed by the delta and b chains.

The protein resides in the cell inner membrane. It catalyses the reaction ATP + H2O + 4 H(+)(in) = ADP + phosphate + 5 H(+)(out). Functionally, produces ATP from ADP in the presence of a proton gradient across the membrane. The alpha chain is a regulatory subunit. This is ATP synthase subunit alpha from Pectobacterium carotovorum subsp. carotovorum (strain PC1).